The chain runs to 681 residues: Proline dehydrogenase 1, mitochondrial (681 aa).

A mitochondrion-targeting transit peptide spans 1–30 (MALLRSLSAQRTAISLVYGRNSSKSSNSVA). Polar residues predominate over residues 76 to 87 (STLVQPEVVSSE). 2 disordered regions span residues 76–113 (STLVQPEVVSSETVKRSMKQESSQEKNPSPAGSPQRDP) and 216–239 (EEAEKREVESSVSSAGDKKEEGSM). The span at 88-99 (TVKRSMKQESSQ) shows a compositional bias: basic and acidic residues.

Belongs to the proline oxidase family. FAD is required as a cofactor. As to expression, most abundant in developing nervous system.

The protein resides in the mitochondrion matrix. The catalysed reaction is L-proline + a quinone = (S)-1-pyrroline-5-carboxylate + a quinol + H(+). It participates in amino-acid degradation; L-proline degradation into L-glutamate; L-glutamate from L-proline: step 1/2. Functionally, converts proline to delta-1-pyrroline-5-carboxylate. Involved in the conversion of proline to glutamate, which functions as a transmitter at neuromuscular junctions. Glutamate deficiency could possibly account for reduced motor activity. This chain is Proline dehydrogenase 1, mitochondrial (slgA), found in Drosophila melanogaster (Fruit fly).